The chain runs to 151 residues: MATLEQNLQQMLQGSVEDLGCELWGIECQRAGRFMTVRLYIDKEGGVTVDDCADVSRQVSAILDVEDPIADKYNLEVSSPGLDRPLFTLEQFQRYVGQEISVHLRIPMLDRRKWQGKLERIEGDMLTLIVDDQEQSFALSNIQKANVIPKF.

This sequence belongs to the RimP family.

Its subcellular location is the cytoplasm. Functionally, required for maturation of 30S ribosomal subunits. This Mannheimia succiniciproducens (strain KCTC 0769BP / MBEL55E) protein is Ribosome maturation factor RimP.